A 1170-amino-acid polypeptide reads, in one-letter code: Cellulose synthase-like protein D2 (1170 aa).

3 disordered regions span residues 1–48, 54–73, and 269–295; these read MASS…RRTH, SYSRDDLDSELGNSGDMSPE, and NEVDNGGGGGGGGGLGGGDGQPAEFTS. The span at 10 to 24 shows a compositional bias: low complexity; the sequence is RHSNSSRLSRMSYSG. The span at 273–288 shows a compositional bias: gly residues; sequence NGGGGGGGGGLGGGDG. The next 2 membrane-spanning stretches (helical) occupy residues 311–331 and 341–361; these read VLSPYRLLILIRMAVLGLFLA and AMWLWGMSVVCELWFGLSWLL. Asp-441 is an active-site residue. Residues 527–551 are a coiled coil; that stretch reads HAREEIKAMKRQREAALDDVVEAVK. The active site involves Asp-873. The next 6 membrane-spanning stretches (helical) occupy residues 955-975, 981-1001, 1027-1047, 1070-1090, 1104-1124, and 1134-1154; these read IFLIVYCFLPALSLFSGQFIV, TFLTYLLVITLTMCMLAVLEI, LAAVLQGLLKVIAGIEISFTL, SLMIPPIVIMMVNLIAIAVGF, LLGGVFFSFWVLAHLYPFAKG, and TIVFVWSGLLAITISLLWVAI.

Belongs to the glycosyltransferase 2 family. Plant cellulose synthase-like D subfamily.

The protein resides in the golgi apparatus membrane. In terms of biological role, thought to be a Golgi-localized beta-glycan synthase that polymerize the backbones of noncellulosic polysaccharides (hemicelluloses) of plant cell wall. In Oryza sativa subsp. japonica (Rice), this protein is Cellulose synthase-like protein D2 (CSLD2).